We begin with the raw amino-acid sequence, 138 residues long: Translation initiation factor 5A (138 aa).

The residue at position 37 (lysine 37) is a Hypusine.

It belongs to the eIF-5A family.

Its subcellular location is the cytoplasm. Functions by promoting the formation of the first peptide bond. This chain is Translation initiation factor 5A (eif5a), found in Pyrococcus horikoshii (strain ATCC 700860 / DSM 12428 / JCM 9974 / NBRC 100139 / OT-3).